A 148-amino-acid chain; its full sequence is Lysozyme C (148 aa).

The first 18 residues, 1-18 (MKVLVILGLVLLSVMVQG), serve as a signal peptide directing secretion. The C-type lysozyme domain maps to 19-148 (KVFERCELAR…VSQYVQGCGV (130 aa)). Cystine bridges form between Cys24/Cys146, Cys48/Cys134, Cys83/Cys99, and Cys95/Cys113. Catalysis depends on residues Glu53 and Asp71.

This sequence belongs to the glycosyl hydrolase 22 family. As to quaternary structure, monomer.

It is found in the secreted. The enzyme catalyses Hydrolysis of (1-&gt;4)-beta-linkages between N-acetylmuramic acid and N-acetyl-D-glucosamine residues in a peptidoglycan and between N-acetyl-D-glucosamine residues in chitodextrins.. Lysozymes have primarily a bacteriolytic function; those in tissues and body fluids are associated with the monocyte-macrophage system and enhance the activity of immunoagents. This is Lysozyme C (LYZ) from Saimiri sciureus (Common squirrel monkey).